Here is a 489-residue protein sequence, read N- to C-terminus: WD repeat-containing protein JIP5 (489 aa).

The stretch at 4 to 45 (PLSSDALDLCFHPAAETNLLAVGLISGKIQLINYDDYLSSPS) is one WD 1 repeat. The disordered stretch occupies residues 46–66 (SSRTPLAPPSKKSKPSTISSA). One copy of the WD 2 repeat lies at 124-163 (EVHDAAPSRVLPVDESLVVTGDDDGVVRLWDVRKGGGKGI). A disordered region spans residues 192-246 (SIKEAKKSKTQLKKQRRRARQAERLKEHDKEKREQNASDTEASEPDSEDDAAIKV). A compositionally biased stretch (basic residues) spans 199-210 (SKTQLKKQRRRA). The span at 211–227 (RQAERLKEHDKEKREQN) shows a compositional bias: basic and acidic residues. Acidic residues predominate over residues 232 to 241 (EASEPDSEDD). WD repeat units follow at residues 279–318 (DQEDELLSITSIRSSTKLVVGTQLGILSLWTPSRGLLDHV) and 323–363 (GHPA…GVIA). Residues 417 to 489 (IVGLAEDDSD…AGKGGFFSDL (73 aa)) form a disordered region. Composition is skewed to acidic residues over residues 421–440 (AEDDSDDDDDDDDDDDDDDD) and 449–472 (DGAEQTDGDAESGQDDEQDPDSED).

The protein belongs to the WD repeat WDR55 family.

The protein localises to the nucleus. Its subcellular location is the nucleolus. This Mycosarcoma maydis (Corn smut fungus) protein is WD repeat-containing protein JIP5 (JIP5).